The sequence spans 319 residues: V-set and transmembrane domain-containing protein 4 (319 aa).

Residues M1–A23 form the signal peptide. The Ig-like domain occupies L24–S154. Residues N25 and N41 are each glycosylated (N-linked (GlcNAc...) asparagine). A disulfide bridge connects residues C46 and C126. N-linked (GlcNAc...) asparagine glycosylation occurs at N143. The helical transmembrane segment at A180–W200 threads the bilayer.

In terms of processing, proteolytically cleaved to generate a bioactive peptide. In terms of tissue distribution, peptide Lv is widely expressed in various tissues and the central nervous system, including the retinal photoreceptor layer, hippocampus, olfactory bulb, and cerebellum.

The protein localises to the cell membrane. It localises to the secreted. Functionally, peptide Lv enhances L-type voltage-gated calcium channel (L-VGCC) currents in retinal photoreceptors. The protein is V-set and transmembrane domain-containing protein 4 (Vstm4) of Mus musculus (Mouse).